The chain runs to 511 residues: V-type proton ATPase subunit B (511 aa).

Arginine 381 contacts ATP. Positions 484 to 511 (FYGRDREQDDDEEEEEDPDKSGDKLIDA) are disordered. Residues 491-501 (QDDDEEEEEDP) show a composition bias toward acidic residues. Residues 502 to 511 (DKSGDKLIDA) are compositionally biased toward basic and acidic residues.

The protein belongs to the ATPase alpha/beta chains family. As to quaternary structure, V-ATPase is a heteromultimeric enzyme composed of a peripheral catalytic V1 complex (components A to H) attached to an integral membrane V0 proton pore complex (components: a, c, c', c'', d, e, f and VOA1).

Its subcellular location is the vacuole membrane. In terms of biological role, non-catalytic subunit of the V1 complex of vacuolar(H+)-ATPase (V-ATPase), a multisubunit enzyme composed of a peripheral complex (V1) that hydrolyzes ATP and a membrane integral complex (V0) that translocates protons. V-ATPase is responsible for acidifying and maintaining the pH of intracellular compartments. The sequence is that of V-type proton ATPase subunit B (VMA2) from Candida tropicalis (Yeast).